Consider the following 64-residue polypeptide: Conotoxin Am1.1 (64 aa).

The signal sequence occupies residues 1-22 (MSCLPVFVILLLLTASGPSVDA). The propeptide occupies 23 to 49 (RLKTKDDVPLSSFRDNAKSTLRRLQDK). The residue at position 60 (Pro60) is a 4-hydroxyproline; partial; in major form.

It belongs to the conotoxin T superfamily. Contains 2 disulfide bonds. Expressed by the venom duct.

It is found in the secreted. Its function is as follows. Probable toxin that inhibits ion channels. This is Conotoxin Am1.1 from Conus amadis (Amadis cone).